Consider the following 110-residue polypeptide: Large ribosomal subunit protein uL22 (110 aa).

The protein belongs to the universal ribosomal protein uL22 family. As to quaternary structure, part of the 50S ribosomal subunit.

Its function is as follows. This protein binds specifically to 23S rRNA; its binding is stimulated by other ribosomal proteins, e.g. L4, L17, and L20. It is important during the early stages of 50S assembly. It makes multiple contacts with different domains of the 23S rRNA in the assembled 50S subunit and ribosome. The globular domain of the protein is located near the polypeptide exit tunnel on the outside of the subunit, while an extended beta-hairpin is found that lines the wall of the exit tunnel in the center of the 70S ribosome. The sequence is that of Large ribosomal subunit protein uL22 from Leptospira interrogans serogroup Icterohaemorrhagiae serovar copenhageni (strain Fiocruz L1-130).